A 396-amino-acid polypeptide reads, in one-letter code: 1-deoxy-D-xylulose 5-phosphate reductoisomerase (396 aa).

The NADPH site is built by Thr10, Gly11, Ser12, Ile13, and Asn123. Lys124 serves as a coordination point for 1-deoxy-D-xylulose 5-phosphate. Residue Glu125 coordinates NADPH. Asp149 is a binding site for Mn(2+). 1-deoxy-D-xylulose 5-phosphate is bound by residues Ser150, Glu151, Ser185, and His208. Glu151 lines the Mn(2+) pocket. Gly214 provides a ligand contact to NADPH. Residues Ser221, Asn226, Lys227, and Glu230 each coordinate 1-deoxy-D-xylulose 5-phosphate. A Mn(2+)-binding site is contributed by Glu230.

This sequence belongs to the DXR family. It depends on Mg(2+) as a cofactor. Mn(2+) serves as cofactor.

The enzyme catalyses 2-C-methyl-D-erythritol 4-phosphate + NADP(+) = 1-deoxy-D-xylulose 5-phosphate + NADPH + H(+). Its pathway is isoprenoid biosynthesis; isopentenyl diphosphate biosynthesis via DXP pathway; isopentenyl diphosphate from 1-deoxy-D-xylulose 5-phosphate: step 1/6. Its function is as follows. Catalyzes the NADPH-dependent rearrangement and reduction of 1-deoxy-D-xylulose-5-phosphate (DXP) to 2-C-methyl-D-erythritol 4-phosphate (MEP). The protein is 1-deoxy-D-xylulose 5-phosphate reductoisomerase of Shewanella baltica (strain OS223).